A 379-amino-acid polypeptide reads, in one-letter code: PqqA peptide cyclase (379 aa).

A Radical SAM core domain is found at leucine 8–arginine 220. Positions 22, 26, and 29 each coordinate [4Fe-4S] cluster.

Belongs to the radical SAM superfamily. PqqE family. As to quaternary structure, interacts with PqqD. The interaction is necessary for activity of PqqE. Requires [4Fe-4S] cluster as cofactor.

The enzyme catalyses [PQQ precursor protein] + S-adenosyl-L-methionine = E-Y cross-linked-[PQQ precursor protein] + 5'-deoxyadenosine + L-methionine + H(+). Its pathway is cofactor biosynthesis; pyrroloquinoline quinone biosynthesis. Its function is as follows. Catalyzes the cross-linking of a glutamate residue and a tyrosine residue in the PqqA protein as part of the biosynthesis of pyrroloquinoline quinone (PQQ). This Methylobacterium nodulans (strain LMG 21967 / CNCM I-2342 / ORS 2060) protein is PqqA peptide cyclase.